The primary structure comprises 410 residues: TNF receptor-associated factor family protein DDB_G0279745 (410 aa).

The RING-type; degenerate zinc finger occupies 27 to 67; it reads CVICSFPLFDGLQCKRGHGACKSCWEKIIGENGKKECHSCR. 2 TRAF-type zinc fingers span residues 81-154 and 154-213; these read YLEK…SLEQ and QHQN…DESI. Positions 216–284 form a coiled coil; that stretch reads LSNSIVEIQK…SMINKLDDSA (69 aa).

The protein belongs to the TNF receptor-associated factor family.

The protein resides in the cytoplasm. In terms of biological role, probable adapter protein and signal transducer that links members of the tumor necrosis factor receptor family to different signaling pathways by association with the receptor cytoplasmic domain and kinases. The sequence is that of TNF receptor-associated factor family protein DDB_G0279745 from Dictyostelium discoideum (Social amoeba).